Consider the following 483-residue polypeptide: Aspartyl/glutamyl-tRNA(Asn/Gln) amidotransferase subunit B (483 aa).

It belongs to the GatB/GatE family. GatB subfamily. Heterotrimer of A, B and C subunits.

It carries out the reaction L-glutamyl-tRNA(Gln) + L-glutamine + ATP + H2O = L-glutaminyl-tRNA(Gln) + L-glutamate + ADP + phosphate + H(+). The enzyme catalyses L-aspartyl-tRNA(Asn) + L-glutamine + ATP + H2O = L-asparaginyl-tRNA(Asn) + L-glutamate + ADP + phosphate + 2 H(+). In terms of biological role, allows the formation of correctly charged Asn-tRNA(Asn) or Gln-tRNA(Gln) through the transamidation of misacylated Asp-tRNA(Asn) or Glu-tRNA(Gln) in organisms which lack either or both of asparaginyl-tRNA or glutaminyl-tRNA synthetases. The reaction takes place in the presence of glutamine and ATP through an activated phospho-Asp-tRNA(Asn) or phospho-Glu-tRNA(Gln). This Rickettsia conorii (strain ATCC VR-613 / Malish 7) protein is Aspartyl/glutamyl-tRNA(Asn/Gln) amidotransferase subunit B.